The chain runs to 263 residues: Bidirectional sugar transporter SWEET3 (263 aa).

Topologically, residues 1 to 7 (MGDKLRL) are extracellular. The helical transmembrane segment at 8–28 (SIGILGNGASLLLYTAPIVTF) threads the bilayer. One can recognise a MtN3/slv 1 domain in the interval 9 to 97 (IGILGNGASL…FIYFYYASPK (89 aa)). The Cytoplasmic segment spans residues 29–42 (SRVFKKKSTEEFSC). The chain crosses the membrane as a helical span at residues 43–63 (FPYVMTLFNCLIYTWYGLPIV). At 64–71 (SHLWENLP) the chain is on the extracellular side. A helical membrane pass occupies residues 72–92 (LVTINGVGILLESIFIFIYFY). At 93–103 (YASPKEKIKVG) the chain is on the cytoplasmic side. A helical membrane pass occupies residues 104–124 (VTFVPVIVGFGLTTAISALVF). The Extracellular segment spans residues 125-132 (DDHRHRKS). The chain crosses the membrane as a helical span at residues 133-153 (FVGSVGLVASISMYGSPLVVM). A MtN3/slv 2 domain is found at 133-217 (FVGSVGLVAS…ILYFKYKNKK (85 aa)). The Cytoplasmic portion of the chain corresponds to 154-165 (KKVIETRSVEYM). The helical transmembrane segment at 166 to 186 (PFYLSFFSFLASSLWLAYGLL) threads the bilayer. Over 187 to 190 (SHDL) the chain is Extracellular. The helical transmembrane segment at 191-211 (FLASPNMVATPLGILQLILYF) threads the bilayer. Residues 212-263 (KYKNKKDLAPTTMVITKRNDHDDKNKATLEFVVDVDRNSDTNEKNSNNASSI) are Cytoplasmic-facing.

Belongs to the SWEET sugar transporter family. In terms of assembly, forms heterooligomers with SWEET11, SWEET13 and SWEET17.

Its subcellular location is the cell membrane. Its function is as follows. Mediates both low-affinity uptake and efflux of sugar across the plasma membrane. The polypeptide is Bidirectional sugar transporter SWEET3 (Arabidopsis thaliana (Mouse-ear cress)).